The sequence spans 918 residues: Chitin synthase C (918 aa).

The tract at residues 1–63 (MSYNRLGDPY…EMPSSDRLAE (63 aa)) is disordered. The segment covering 22 to 37 (NPSSLSNRSPSPGRPL) has biased composition (low complexity). 4 helical membrane passes run 562 to 581 (WLNG…YQLW), 605 to 625 (LFAW…TTYL), 637 to 657 (VLGV…FVLS), and 672 to 692 (MVYL…FVTV). N-linked (GlcNAc...) asparagine glycosylation is present at Asn-712. Helical transmembrane passes span 715–735 (FFSI…ASII), 845–865 (VVLV…SSAG), and 890–910 (VVLW…MWFL).

Belongs to the chitin synthase family. Class I subfamily. As to expression, mainly expressed in hyphae and conidiphores. Relatively strongly expressed in young cleistothecia and in mature ascospores, but negligible in Huelle cells.

It is found in the cell membrane. It localises to the cell septum. Its subcellular location is the cell tip. It catalyses the reaction [(1-&gt;4)-N-acetyl-beta-D-glucosaminyl](n) + UDP-N-acetyl-alpha-D-glucosamine = [(1-&gt;4)-N-acetyl-beta-D-glucosaminyl](n+1) + UDP + H(+). Its function is as follows. Polymerizes chitin, a structural polymer of the cell wall and septum, by transferring the sugar moiety of UDP-GlcNAc to the non-reducing end of the growing chitin polymer. ChsC and chsA share critical functions in hyphal wall integrity and differentiation. ChsA and chsC share also overlapping roles in septum formation. The polypeptide is Chitin synthase C (Emericella nidulans (strain FGSC A4 / ATCC 38163 / CBS 112.46 / NRRL 194 / M139) (Aspergillus nidulans)).